Consider the following 333-residue polypeptide: Ferrochelatase (333 aa).

Fe cation contacts are provided by His-202 and Glu-284.

It belongs to the ferrochelatase family.

It is found in the cytoplasm. It carries out the reaction heme b + 2 H(+) = protoporphyrin IX + Fe(2+). Its pathway is porphyrin-containing compound metabolism; protoheme biosynthesis; protoheme from protoporphyrin-IX: step 1/1. Its function is as follows. Catalyzes the ferrous insertion into protoporphyrin IX. The chain is Ferrochelatase from Francisella tularensis subsp. holarctica (strain LVS).